The sequence spans 170 residues: Myosin regulatory light chain 1 (170 aa).

Residues 1-13 show a composition bias toward basic residues; that stretch reads MSKAAKKKSSKKR. The tract at residues 1-22 is disordered; the sequence is MSKAAKKKSSKKRSGSEAAQFD. 2 EF-hand domains span residues 24–59 and 93–128; these read KTIQEFKEAFGIMDQNKDGIIDKSDLKDLYASMGQI and DPEATIIGAFAMFDKKDCGKIKEDDLIKILQNKRGE. The Ca(2+) site is built by aspartate 37, asparagine 39, aspartate 41, and aspartate 48.

In terms of assembly, myosin is a hexamer of 2 heavy chains and 4 light chains (two regulatory light chains and two essential light chains).

The polypeptide is Myosin regulatory light chain 1 (mlc-1) (Caenorhabditis elegans).